Reading from the N-terminus, the 184-residue chain is ATP synthase subunit b 1 (184 aa).

The helical transmembrane segment at 4–24 (LSILAVLAASPAMAATGPFLS) threads the bilayer.

Belongs to the ATPase B chain family. In terms of assembly, F-type ATPases have 2 components, F(1) - the catalytic core - and F(0) - the membrane proton channel. F(1) has five subunits: alpha(3), beta(3), gamma(1), delta(1), epsilon(1). F(0) has three main subunits: a(1), b(2) and c(10-14). The alpha and beta chains form an alternating ring which encloses part of the gamma chain. F(1) is attached to F(0) by a central stalk formed by the gamma and epsilon chains, while a peripheral stalk is formed by the delta and b chains.

The protein resides in the cell inner membrane. In terms of biological role, f(1)F(0) ATP synthase produces ATP from ADP in the presence of a proton or sodium gradient. F-type ATPases consist of two structural domains, F(1) containing the extramembraneous catalytic core and F(0) containing the membrane proton channel, linked together by a central stalk and a peripheral stalk. During catalysis, ATP synthesis in the catalytic domain of F(1) is coupled via a rotary mechanism of the central stalk subunits to proton translocation. Component of the F(0) channel, it forms part of the peripheral stalk, linking F(1) to F(0). The protein is ATP synthase subunit b 1 of Cereibacter sphaeroides (strain ATCC 17023 / DSM 158 / JCM 6121 / CCUG 31486 / LMG 2827 / NBRC 12203 / NCIMB 8253 / ATH 2.4.1.) (Rhodobacter sphaeroides).